We begin with the raw amino-acid sequence, 103 residues long: Pyrimidine/purine nucleoside phosphorylase (103 aa).

Belongs to the nucleoside phosphorylase PpnP family.

The enzyme catalyses a purine D-ribonucleoside + phosphate = a purine nucleobase + alpha-D-ribose 1-phosphate. It carries out the reaction adenosine + phosphate = alpha-D-ribose 1-phosphate + adenine. It catalyses the reaction cytidine + phosphate = cytosine + alpha-D-ribose 1-phosphate. The catalysed reaction is guanosine + phosphate = alpha-D-ribose 1-phosphate + guanine. The enzyme catalyses inosine + phosphate = alpha-D-ribose 1-phosphate + hypoxanthine. It carries out the reaction thymidine + phosphate = 2-deoxy-alpha-D-ribose 1-phosphate + thymine. It catalyses the reaction uridine + phosphate = alpha-D-ribose 1-phosphate + uracil. The catalysed reaction is xanthosine + phosphate = alpha-D-ribose 1-phosphate + xanthine. Functionally, catalyzes the phosphorolysis of diverse nucleosides, yielding D-ribose 1-phosphate and the respective free bases. Can use uridine, adenosine, guanosine, cytidine, thymidine, inosine and xanthosine as substrates. Also catalyzes the reverse reactions. In Cupriavidus metallidurans (strain ATCC 43123 / DSM 2839 / NBRC 102507 / CH34) (Ralstonia metallidurans), this protein is Pyrimidine/purine nucleoside phosphorylase.